We begin with the raw amino-acid sequence, 94 residues long: Large ribosomal subunit protein bL28 (94 aa).

The disordered stretch occupies residues methionine 1 to serine 21. Residues glycine 11–histidine 20 show a composition bias toward polar residues.

This sequence belongs to the bacterial ribosomal protein bL28 family.

The polypeptide is Large ribosomal subunit protein bL28 (Leptospira borgpetersenii serovar Hardjo-bovis (strain JB197)).